A 481-amino-acid chain; its full sequence is uncharacterized protein (481 aa).

The chain crosses the membrane as a helical span at residues 18–38; it reads FMIVTAIAVAIFVVITGVVIF.

The protein localises to the cell inner membrane. Functionally, involved in DNA conjugation in the recipient strain. This is an uncharacterized protein from Mycolicibacterium smegmatis (strain MKD8) (Mycobacterium smegmatis).